A 117-amino-acid chain; its full sequence is Circadian clock oscillator protein KaiB (117 aa).

Belongs to the KaiB family. As to quaternary structure, may undergo a major conformational rearrangment; in the free state forms homooligomers. When bound to KaiC switches to a monomeric thioredoxin-fold (KaiB(fs)). The active oscillator complex is probably KaiC(6):KaiB(6).

Component of the KaiBC clock protein complex, which constitutes the main circadian regulator in cyanobacteria; it may modify the ATPase activity of KaiC. Functionally, may be a metamorphic protein which reversibly switches between an inactive tetrameric fold and a rare, thioredoxin-like monomeric fold (KaiB(fs)). KaiB(fs) binds phospho-KaiC, and perhaps clock output effectors. This Prochlorococcus marinus (strain SARG / CCMP1375 / SS120) protein is Circadian clock oscillator protein KaiB.